Here is a 720-residue protein sequence, read N- to C-terminus: Biotin biosynthesis bifunctional protein BioWF (720 aa).

The interval 1-39 (MRFSIKMRASARVSSSPSTSDGSSGDHTESRDRADRHIS) is disordered. Low complexity predominate over residues 8–23 (RASARVSSSPSTSDGS). A compositionally biased stretch (basic and acidic residues) spans 24-39 (SGDHTESRDRADRHIS). Residue Arg-314 coordinates substrate. A pyridoxal 5'-phosphate-binding site is contributed by 401–402 (GY). Residue His-439 participates in substrate binding. Pyridoxal 5'-phosphate-binding positions include Ser-488, 513-516 (DDAH), and 564-567 (TASK). Lys-567 is subject to N6-(pyridoxal phosphate)lysine. Thr-684 serves as a coordination point for substrate.

In the N-terminal section; belongs to the BioW family. The protein in the C-terminal section; belongs to the class-II pyridoxal-phosphate-dependent aminotransferase family. BioF subfamily. As to quaternary structure, homodimer. Mg(2+) is required as a cofactor. It depends on pyridoxal 5'-phosphate as a cofactor.

The enzyme catalyses heptanedioate + ATP + CoA = 6-carboxyhexanoyl-CoA + AMP + diphosphate. It catalyses the reaction 6-carboxyhexanoyl-[ACP] + L-alanine + H(+) = (8S)-8-amino-7-oxononanoate + holo-[ACP] + CO2. Its pathway is metabolic intermediate metabolism; pimeloyl-CoA biosynthesis; pimeloyl-CoA from pimelate: step 1/1. It functions in the pathway cofactor biosynthesis; biotin biosynthesis. Its function is as follows. Catalyzes both the decarboxylative condensation of pimeloyl-[acyl-carrier protein] and L-alanine to produce 8-amino-7-oxononanoate (AON), [acyl-carrier protein], and carbon dioxide, and the transformation of pimelate into pimeloyl-CoA with concomitant hydrolysis of ATP to AMP. The polypeptide is Biotin biosynthesis bifunctional protein BioWF (bioWF) (Corynebacterium kroppenstedtii (strain DSM 44385 / JCM 11950 / CIP 105744 / CCUG 35717)).